The sequence spans 445 residues: C4-dicarboxylate transport protein (445 aa).

8 consecutive transmembrane segments (helical) span residues 17-37 (FYQI…LLGY), 56-76 (LVKM…IAAM), 91-111 (VYFL…SHIV), 157-177 (FVGG…LSLA), 200-220 (LVAI…AFTI), 233-253 (MLVG…LGMV), 319-339 (IYMT…LSLG), and 367-387 (AATL…ILGV).

The protein belongs to the dicarboxylate/amino acid:cation symporter (DAACS) (TC 2.A.23) family.

It localises to the cell inner membrane. In terms of biological role, responsible for the transport of dicarboxylates such as succinate, fumarate, and malate from the periplasm across the membrane. This is C4-dicarboxylate transport protein from Bordetella avium (strain 197N).